The sequence spans 276 residues: Protein canopy homolog 3 (276 aa).

Positions 1 to 26 are cleaved as a signal peptide; sequence MESMSELAPRCLLFPLLLLLPLLLLP. The Saposin B-type domain maps to 47-269; that stretch reads SKCEVCKYVA…EGVQKASPLP (223 aa). Cystine bridges form between C49/C206, C52/C194, and C104/C166. N-linked (GlcNAc...) asparagine glycosylation occurs at N153. The stretch at 153 to 179 forms a coiled coil; sequence NETSAEVADLKKQCDVLVEEFEEVIED. The interval 218–276 is disordered; the sequence is IASLGGKKSKKKRSGVKGSSSGSSKQRKELGGLGEDANAEEEEGVQKASPLPHSPPDEL.

It belongs to the canopy family. In terms of assembly, interacts with HSP90B1; this interaction is disrupted in the presence of ATP. Interacts with TLR1, TLR2, TLR4 and TLR9. Strongest interaction with TLR4.

It localises to the endoplasmic reticulum. Its function is as follows. Toll-like receptor (TLR)-specific co-chaperone for HSP90B1. Required for proper TLR folding, except that of TLR3, and hence controls TLR exit from the endoplasmic reticulum. Consequently, required for both innate and adaptive immune responses. This is Protein canopy homolog 3 (Cnpy3) from Mus musculus (Mouse).